A 426-amino-acid polypeptide reads, in one-letter code: 5-aminovalerate aminotransferase DavT (426 aa).

Pyridoxal 5'-phosphate contacts are provided by residues 112-113, tyrosine 139, and 240-243; these read GS and DEVQ. Lysine 269 bears the N6-(pyridoxal phosphate)lysine mark. Threonine 298 provides a ligand contact to pyridoxal 5'-phosphate.

The protein belongs to the class-III pyridoxal-phosphate-dependent aminotransferase family. Pyridoxal 5'-phosphate serves as cofactor.

It catalyses the reaction 5-aminopentanoate + 2-oxoglutarate = 5-oxopentanoate + L-glutamate. Functionally, catalyzes the conversion of 5-aminovalerate to 5-oxopentanoate. The protein is 5-aminovalerate aminotransferase DavT (davT) of Pseudomonas aeruginosa (strain ATCC 15692 / DSM 22644 / CIP 104116 / JCM 14847 / LMG 12228 / 1C / PRS 101 / PAO1).